The sequence spans 117 residues: Large ribosomal subunit protein bL20c (117 aa).

Belongs to the bacterial ribosomal protein bL20 family.

Its subcellular location is the plastid. The protein localises to the chloroplast. Binds directly to 23S ribosomal RNA and is necessary for the in vitro assembly process of the 50S ribosomal subunit. It is not involved in the protein synthesizing functions of that subunit. This Citrus sinensis (Sweet orange) protein is Large ribosomal subunit protein bL20c.